The following is a 480-amino-acid chain: MSELGEYSKLENKELRTEFELTNFPFPGTTDNDSDDGSQGQNSLNIITPDMDDTLVNDVLRENDKKSSMRMAFMNLANSILGAGIITQPFAIKNAGILGGLLSYVALGFIVDWTLRLIVINLTLAGKRTYQGTVEHVMGKKGKLLILFTNGLFAFGGCIGYCIIIGDTIPHVLRAIFSQNDGNVHFWLRRNVIIVMVTTFISFPLSMKRNIEALSKASFLAVISMIIIVLTVVIRGPMLPYDWKGHSLKLSDFFMKATIFRSLSVISFALVCHHNTSFIFFSMRNRSVAKFTRLTHISIIISVICCALMGYSGFAVFKEKTKGNVLNSFPGTDTAINIARLCFGFNMLTTFPMEIFVLRDVVGNLLHECNLIKNYDEHTQLSGKQHVVITSSLVFITMGISLTTCNLGALFELIGATTASTMAYILPPYTNLLLTSKKKSWKERLPFYLCICFGFMIMIISSTQTIIDAVNGSDGQHCQI.

The tract at residues 21–48 (LTNFPFPGTTDNDSDDGSQGQNSLNIIT) is disordered. Residues 37 to 46 (GSQGQNSLNI) are compositionally biased toward polar residues. A run of 9 helical transmembrane segments spans residues 72–92 (AFMN…PFAI), 95–115 (AGIL…DWTL), 145–165 (LILF…CIII), 214–234 (LSKA…TVVI), 263–283 (LSVI…FFSM), 297–317 (ISII…FAVF), 338–358 (IARL…IFVL), 394–414 (VFIT…FELI), and 447–467 (FYLC…QTII).

It belongs to the amino acid/polyamine transporter 2 family.

The protein localises to the vacuole membrane. In terms of biological role, probable amino acid transporter of unknown specificity. The protein is Vacuolar amino acid transporter 2 (AVT2) of Saccharomyces cerevisiae (strain ATCC 204508 / S288c) (Baker's yeast).